Consider the following 850-residue polypeptide: Mitogen-activated protein kinase kinase kinase 11 (850 aa).

A Phosphoserine modification is found at serine 11. A disordered region spans residues tryptophan 16 to serine 35. Positions asparagine 17–arginine 31 are enriched in gly residues. Serine 35 is modified (phosphoserine). The region spanning tyrosine 42–glycine 106 is the SH3 domain. In terms of domain architecture, Protein kinase spans leucine 118–leucine 380. ATP-binding positions include isoleucine 124–valine 132 and lysine 145. Aspartate 242 functions as the Proton acceptor in the catalytic mechanism. Threonine 278 carries the post-translational modification Phosphothreonine; by autocatalysis. Serine 282 carries the post-translational modification Phosphoserine; by autocatalysis and MAP4K1. Residue serine 395 is modified to Phosphoserine. Leucine-zipper regions lie at residues isoleucine 404 to leucine 425 and leucine 439 to leucine 460. Serine 508 and serine 525 each carry phosphoserine. Positions glutamine 535 to arginine 644 are disordered. The segment covering proline 538–arginine 547 has biased composition (polar residues). Residues serine 549, serine 556, and serine 557 each carry the phosphoserine modification. Over residues arginine 551–alanine 563 the composition is skewed to basic and acidic residues. The segment covering serine 598–leucine 610 has biased composition (low complexity). Position 655 is a phosphoserine (serine 655). Residues glycine 657–proline 850 form a disordered region. A compositionally biased stretch (pro residues) spans threonine 677–proline 693. Positions leucine 700–proline 711 are enriched in polar residues. Position 709 is a phosphoserine (serine 709). Position 712 is a phosphothreonine (threonine 712). Residues serine 728, serine 731, serine 743, serine 751, serine 761, serine 773, serine 792, serine 796, and serine 818 each carry the phosphoserine modification. Low complexity predominate over residues proline 763–arginine 776. The segment covering arginine 790–arginine 802 has biased composition (pro residues). The span at arginine 803 to proline 819 shows a compositional bias: low complexity.

It belongs to the protein kinase superfamily. STE Ser/Thr protein kinase family. MAP kinase kinase kinase subfamily. Homodimer; undergoes dimerization during activation. Interacts with MAP2K4/MKK4 and MAP2K7/MKK7. Found in a complex with SH3RF1, RAC1, MAP2K7/MKK7, MAPK8IP1/JIP1 and MAPK8/JNK1. Mg(2+) is required as a cofactor. Post-translationally, autophosphorylation on serine and threonine residues within the activation loop plays a role in enzyme activation. Thr-278 is likely to be the main autophosphorylation site. Phosphorylation of Ser-556 and Ser-557 is induced by CDC42.

The protein resides in the cytoplasm. It is found in the cytoskeleton. The protein localises to the microtubule organizing center. It localises to the centrosome. It catalyses the reaction L-seryl-[protein] + ATP = O-phospho-L-seryl-[protein] + ADP + H(+). The catalysed reaction is L-threonyl-[protein] + ATP = O-phospho-L-threonyl-[protein] + ADP + H(+). Homodimerization via the leucine zipper domains is required for autophosphorylation and subsequent activation. In terms of biological role, activates the JUN N-terminal pathway. Required for serum-stimulated cell proliferation and for mitogen and cytokine activation of MAPK14 (p38), MAPK3 (ERK) and MAPK8 (JNK1) through phosphorylation and activation of MAP2K4/MKK4 and MAP2K7/MKK7. Plays a role in mitogen-stimulated phosphorylation and activation of BRAF, but does not phosphorylate BRAF directly. Influences microtubule organization during the cell cycle. The polypeptide is Mitogen-activated protein kinase kinase kinase 11 (Map3k11) (Mus musculus (Mouse)).